Reading from the N-terminus, the 272-residue chain is Shikimate dehydrogenase (NADP(+)) (272 aa).

Shikimate contacts are provided by residues 14–16 and threonine 61; that span reads SKS. The active-site Proton acceptor is the lysine 65. Glutamate 77 contributes to the NADP(+) binding site. Residues asparagine 86 and aspartate 102 each coordinate shikimate. NADP(+) contacts are provided by residues 126-130, 149-154, and methionine 213; these read GAGGA and NRTASR. Tyrosine 215 provides a ligand contact to shikimate. Residue glycine 237 participates in NADP(+) binding.

The protein belongs to the shikimate dehydrogenase family. Homodimer.

It carries out the reaction shikimate + NADP(+) = 3-dehydroshikimate + NADPH + H(+). It functions in the pathway metabolic intermediate biosynthesis; chorismate biosynthesis; chorismate from D-erythrose 4-phosphate and phosphoenolpyruvate: step 4/7. Its function is as follows. Involved in the biosynthesis of the chorismate, which leads to the biosynthesis of aromatic amino acids. Catalyzes the reversible NADPH linked reduction of 3-dehydroshikimate (DHSA) to yield shikimate (SA). This is Shikimate dehydrogenase (NADP(+)) from Salmonella heidelberg (strain SL476).